The following is a 498-amino-acid chain: Glycerol kinase (498 aa).

Residue Thr-14 participates in ADP binding. ATP contacts are provided by Thr-14 and Thr-15. Thr-14 contacts sn-glycerol 3-phosphate. Arg-18 is a binding site for ADP. Residues Arg-84, Glu-85, Tyr-136, and Asp-246 each coordinate sn-glycerol 3-phosphate. Arg-84, Glu-85, Tyr-136, Asp-246, and Gln-247 together coordinate glycerol. Thr-268 and Gly-311 together coordinate ADP. Thr-268, Gly-311, Gln-315, and Gly-412 together coordinate ATP. The ADP site is built by Gly-412 and Asn-416.

It belongs to the FGGY kinase family.

It catalyses the reaction glycerol + ATP = sn-glycerol 3-phosphate + ADP + H(+). It participates in polyol metabolism; glycerol degradation via glycerol kinase pathway; sn-glycerol 3-phosphate from glycerol: step 1/1. With respect to regulation, inhibited by fructose 1,6-bisphosphate (FBP). Functionally, key enzyme in the regulation of glycerol uptake and metabolism. Catalyzes the phosphorylation of glycerol to yield sn-glycerol 3-phosphate. The polypeptide is Glycerol kinase (Leptospira biflexa serovar Patoc (strain Patoc 1 / Ames)).